Consider the following 733-residue polypeptide: Catalase-peroxidase (733 aa).

Residues 1 to 25 (MNEERKCPITGATHKPSAEKGRSNH) are disordered. The span at 16–25 (PSAEKGRSNH) shows a compositional bias: basic and acidic residues. Residues 96–219 (WHSAGTYRTS…LAAVQMGLIY (124 aa)) constitute a cross-link (tryptophyl-tyrosyl-methioninium (Trp-Tyr) (with M-245)). Catalysis depends on H97, which acts as the Proton acceptor. The tryptophyl-tyrosyl-methioninium (Tyr-Met) (with W-96) cross-link spans 219–245 (YVNPEGPNGKPDPLAAAKDIRETFARM). Position 260 (H260) interacts with heme b.

Belongs to the peroxidase family. Peroxidase/catalase subfamily. Homodimer or homotetramer. Heme b is required as a cofactor. In terms of processing, formation of the three residue Trp-Tyr-Met cross-link is important for the catalase, but not the peroxidase activity of the enzyme.

It carries out the reaction H2O2 + AH2 = A + 2 H2O. The catalysed reaction is 2 H2O2 = O2 + 2 H2O. In terms of biological role, bifunctional enzyme with both catalase and broad-spectrum peroxidase activity. The protein is Catalase-peroxidase of Chlorobium chlorochromatii (strain CaD3).